Here is a 632-residue protein sequence, read N- to C-terminus: Arginyl-tRNA--protein transferase 1 (632 aa).

The span at 1 to 18 (MSLKNDASSSHDGGSNRE) shows a compositional bias: polar residues. Disordered regions lie at residues 1-27 (MSLK…HGRR), 113-144 (KLDV…AKSE), 284-312 (NGNI…HQAR), and 517-580 (PAAS…NDIN). Over residues 113–122 (KLDVQPREQR) the composition is skewed to basic and acidic residues. A compositionally biased stretch (polar residues) spans 285–296 (GNISRGANSLDG). The span at 298–310 (ETLHAKKDSENHQ) shows a compositional bias: basic and acidic residues. A compositionally biased stretch (acidic residues) spans 538 to 563 (SDEDEDEDEDDDDDDDDDEEMYETES). Positions 564 to 578 (EDSHIESDPGSKDND) are enriched in basic and acidic residues.

It belongs to the R-transferase family.

It catalyses the reaction an N-terminal L-alpha-aminoacyl-[protein] + L-arginyl-tRNA(Arg) = an N-terminal L-arginyl-L-aminoacyl-[protein] + tRNA(Arg) + H(+). Involved in the post-translational conjugation of arginine to the N-terminal aspartate or glutamate of a protein. This arginylation is required for degradation of the protein via the ubiquitin pathway. Component of the N-end rule pathway with ATE2 and PRT6. The N-end rule pathway regulates seed after-ripening, seedling sugar sensitivity, seedling lipid breakdown, and abscisic acid (ABA) sensitivity of germination. The end-rule pathway regulates various aspects of leaf and shoot development. Involved in the oxygen-dependent N-arginylation of RAP2-12, an activator of hypoxic gene expression. This N-terminal modification leads to ubiquitination by PRT6 and subsequent degradation of RAP2-12 under aerobic conditions. Has an important role in the progression of leaf senescence. Involved in disease resistance. The end-rule pathway plays a role in regulating the timing and amplitude of the immune response following infection with the bacterial pathogen Pseudomonas syringae pv tomato. Regulates the biosynthesis of plant-defense metabolites such as glucosinolates, and the biosynthesis and response to the phytohormone jasmonate (JA), which plays a key role in plant immunity. This Arabidopsis thaliana (Mouse-ear cress) protein is Arginyl-tRNA--protein transferase 1.